The chain runs to 290 residues: Transmembrane protein 33 homolog (290 aa).

Disordered stretches follow at residues 1–22 (MSSP…EFTG) and 39–72 (IDPN…SPRA). Over residues 45–72 (SSNNTTTQRPSTSSSSRTSSSSTSSPRA) the composition is skewed to low complexity. Helical transmembrane passes span 83–103 (LYGA…FYFI), 109–129 (FFYK…FNTF), 150–170 (FVFY…YLLP), and 218–238 (IVLI…LVFI).

This sequence belongs to the PER33/POM33 family.

The protein resides in the membrane. This is Transmembrane protein 33 homolog (tmem33) from Dictyostelium discoideum (Social amoeba).